Consider the following 276-residue polypeptide: Protein G1 (276 aa).

Disordered stretches follow at residues Met1–Arg30 and Ser178–Pro213. Residues Arg21–Arg30 show a composition bias toward basic and acidic residues. An ALOG domain is found at Arg24–Lys183. The span at Ser178–Gly187 shows a compositional bias: basic residues. Positions Lys181 to Arg185 match the Nuclear localization signal motif. The span at Asn189–Arg202 shows a compositional bias: gly residues. Over residues Ala203–Pro213 the composition is skewed to low complexity.

The protein belongs to the plant homeotic and developmental regulators ALOG protein family. In terms of tissue distribution, expressed at the empty glumes of immature spikelets, which are lemmas of the sterile florets located at the lateral side of the spikelet, throughout their development.

It is found in the nucleus. Its function is as follows. Probable transcription regulator that acts as a developmental regulator by promoting cell growth in response to light. Transcription regulator that restrains empty glumes growth, lemmas of the sterile florets located at the lateral side of the rice spikelet, to maintain their small size, probably by repressing lemma identity via transcription regulation. The protein is Protein G1 (G1) of Oryza sativa subsp. japonica (Rice).